The sequence spans 287 residues: 4-hydroxybenzoate octaprenyltransferase (287 aa).

Transmembrane regions (helical) follow at residues 35 to 55, 96 to 116, 211 to 231, 235 to 255, and 262 to 282; these read FAAG…GVVV, LFGV…PLVV, IIAA…MLAG, IYGL…KLIY, and CFTA…ALTL.

It belongs to the UbiA prenyltransferase family. Requires Mg(2+) as cofactor.

Its subcellular location is the cell inner membrane. It carries out the reaction all-trans-octaprenyl diphosphate + 4-hydroxybenzoate = 4-hydroxy-3-(all-trans-octaprenyl)benzoate + diphosphate. The protein operates within cofactor biosynthesis; ubiquinone biosynthesis. Functionally, catalyzes the prenylation of para-hydroxybenzoate (PHB) with an all-trans polyprenyl group. Mediates the second step in the final reaction sequence of ubiquinone-8 (UQ-8) biosynthesis, which is the condensation of the polyisoprenoid side chain with PHB, generating the first membrane-bound Q intermediate 3-octaprenyl-4-hydroxybenzoate. This chain is 4-hydroxybenzoate octaprenyltransferase, found in Shewanella halifaxensis (strain HAW-EB4).